Here is a 137-residue protein sequence, read N- to C-terminus: ATP synthase epsilon chain (137 aa).

This sequence belongs to the ATPase epsilon chain family. As to quaternary structure, F-type ATPases have 2 components, CF(1) - the catalytic core - and CF(0) - the membrane proton channel. CF(1) has five subunits: alpha(3), beta(3), gamma(1), delta(1), epsilon(1). CF(0) has three main subunits: a, b and c.

It localises to the cell inner membrane. Produces ATP from ADP in the presence of a proton gradient across the membrane. In Ruegeria sp. (strain TM1040) (Silicibacter sp.), this protein is ATP synthase epsilon chain.